A 116-amino-acid polypeptide reads, in one-letter code: Large ribosomal subunit protein bL19 (116 aa).

This sequence belongs to the bacterial ribosomal protein bL19 family.

Its function is as follows. This protein is located at the 30S-50S ribosomal subunit interface and may play a role in the structure and function of the aminoacyl-tRNA binding site. The protein is Large ribosomal subunit protein bL19 of Magnetococcus marinus (strain ATCC BAA-1437 / JCM 17883 / MC-1).